A 494-amino-acid chain; its full sequence is Bifunctional pantoate ligase/cytidylate kinase (494 aa).

The tract at residues 1 to 258 (MHFVPTMGGL…CGSTRLIDHA (258 aa)) is pantoate--beta-alanine ligase. Residue 7–14 (MGGLHHGH) coordinates ATP. His14 (proton donor) is an active-site residue. Gln41 serves as a coordination point for (R)-pantoate. Gln41 is a beta-alanine binding site. 130 to 133 (GEKD) lines the ATP pocket. Residue Gln136 coordinates (R)-pantoate. ATP contacts are provided by residues Val159 and 167–170 (SSSR). A cytidylate kinase region spans residues 259–494 (FLMTRSPLVA…VGEEVWPTPV (236 aa)).

The protein in the N-terminal section; belongs to the pantothenate synthetase family. In the C-terminal section; belongs to the cytidylate kinase family. Type 1 subfamily.

Its subcellular location is the cytoplasm. It catalyses the reaction (R)-pantoate + beta-alanine + ATP = (R)-pantothenate + AMP + diphosphate + H(+). The enzyme catalyses CMP + ATP = CDP + ADP. The catalysed reaction is dCMP + ATP = dCDP + ADP. Its pathway is cofactor biosynthesis; (R)-pantothenate biosynthesis; (R)-pantothenate from (R)-pantoate and beta-alanine: step 1/1. Its function is as follows. Catalyzes the condensation of pantoate with beta-alanine in an ATP-dependent reaction via a pantoyl-adenylate intermediate. Catalyzes the transfer of a phosphate group from ATP to either CMP or dCMP to form CDP or dCDP and ADP, respectively. The chain is Bifunctional pantoate ligase/cytidylate kinase from Synechococcus sp. (strain CC9311).